The following is a 102-amino-acid chain: Small ribosomal subunit protein bS6 (102 aa).

Belongs to the bacterial ribosomal protein bS6 family.

Binds together with bS18 to 16S ribosomal RNA. The polypeptide is Small ribosomal subunit protein bS6 (Deinococcus geothermalis (strain DSM 11300 / CIP 105573 / AG-3a)).